Consider the following 533-residue polypeptide: DNA-directed RNA polymerase III subunit RPC3 (533 aa).

Serine 194 carries the post-translational modification Phosphoserine. A disordered region spans residues 197 to 230 (GKGKRRRSSDEDATGEPKAKRPKQTTDNKEPIPD). Basic and acidic residues predominate over residues 211 to 228 (GEPKAKRPKQTTDNKEPI).

Belongs to the eukaryotic RPC3/POLR3C RNA polymerase subunit family. Component of the RNA polymerase III complex consisting of 17 subunits: a ten-subunit horseshoe-shaped catalytic core composed of POLR3A/RPC1, POLR3B/RPC2, POLR1C/RPAC1, POLR1D/RPAC2, POLR3K/RPC10, POLR2E/RPABC1, POLR2F/RPABC2, POLR2H/RPABC3, POLR2K/RPABC4 and POLR2L/RPABC5; a mobile stalk composed of two subunits POLR3H/RPC8 and CRCP/RPC9, protruding from the core and functioning primarily in transcription initiation; and additional subunits homologous to general transcription factors of the RNA polymerase II machinery, POLR3C/RPC3-POLR3F/RPC6-POLR3G/RPC7 heterotrimer required for transcription initiation and POLR3D/RPC4-POLR3E/RPC5 heterodimer involved in both transcription initiation and termination. Directly interacts with POLR3G/RPC7 and POLR3GL. Directly interacts with POLR3F/RPC6. Interacts with GTF3C4. As part of the RNA polymerase III complex, interacts with PKP2.

The protein resides in the nucleus. In terms of biological role, DNA-dependent RNA polymerase catalyzes the transcription of DNA into RNA using the four ribonucleoside triphosphates as substrates. Specific peripheric component of RNA polymerase III (Pol III) which synthesizes small non-coding RNAs including 5S rRNA, snRNAs, tRNAs and miRNAs from at least 500 distinct genomic loci. Part of POLR3C/RPC3-POLR3F/RPC6-POLR3G/RPC7 heterotrimer, coordinates the dynamics of Pol III stalk and clamp modules during the transition from apo to elongation state. Pol III plays a key role in sensing and limiting infection by intracellular bacteria and DNA viruses. Acts as a nuclear and cytosolic DNA sensor involved in innate immune response. Can sense non-self dsDNA that serves as template for transcription into dsRNA. The non-self RNA polymerase III transcripts, such as Epstein-Barr virus-encoded RNAs (EBERs) induce type I interferon and NF-kappa-B through the RIG-I pathway. Preferentially binds single-stranded DNA (ssDNA) in a sequence-independent manner. The chain is DNA-directed RNA polymerase III subunit RPC3 (POLR3C) from Bos taurus (Bovine).